Reading from the N-terminus, the 501-residue chain is Ribose import ATP-binding protein RbsA (501 aa).

2 consecutive ABC transporter domains span residues 5–241 (LQLK…VGRK) and 252–495 (APGD…VGKL). An ATP-binding site is contributed by 37–44 (GENGAGKS).

Belongs to the ABC transporter superfamily. Ribose importer (TC 3.A.1.2.1) family. The complex is composed of an ATP-binding protein (RbsA), two transmembrane proteins (RbsC) and a solute-binding protein (RbsB).

It is found in the cell inner membrane. The catalysed reaction is D-ribose(out) + ATP + H2O = D-ribose(in) + ADP + phosphate + H(+). Part of the ABC transporter complex RbsABC involved in ribose import. Responsible for energy coupling to the transport system. This is Ribose import ATP-binding protein RbsA from Escherichia coli (strain K12).